A 251-amino-acid polypeptide reads, in one-letter code: Imidazole glycerol phosphate synthase subunit HisF (251 aa).

Catalysis depends on residues D11 and D130.

It belongs to the HisA/HisF family. In terms of assembly, heterodimer of HisH and HisF.

It localises to the cytoplasm. It carries out the reaction 5-[(5-phospho-1-deoxy-D-ribulos-1-ylimino)methylamino]-1-(5-phospho-beta-D-ribosyl)imidazole-4-carboxamide + L-glutamine = D-erythro-1-(imidazol-4-yl)glycerol 3-phosphate + 5-amino-1-(5-phospho-beta-D-ribosyl)imidazole-4-carboxamide + L-glutamate + H(+). It functions in the pathway amino-acid biosynthesis; L-histidine biosynthesis; L-histidine from 5-phospho-alpha-D-ribose 1-diphosphate: step 5/9. Its function is as follows. IGPS catalyzes the conversion of PRFAR and glutamine to IGP, AICAR and glutamate. The HisF subunit catalyzes the cyclization activity that produces IGP and AICAR from PRFAR using the ammonia provided by the HisH subunit. The polypeptide is Imidazole glycerol phosphate synthase subunit HisF (Chlorobaculum tepidum (strain ATCC 49652 / DSM 12025 / NBRC 103806 / TLS) (Chlorobium tepidum)).